The chain runs to 391 residues: UPF0229 protein BCA_0588 (391 aa).

Polar residues predominate over residues 1 to 16; the sequence is MGEENQPNYTISQENW. 2 disordered regions span residues 1 to 31 and 80 to 117; these read MGEENQPNYTISQENWSLHRKGYDDQQRHQE and HVGQGNGDSKVGDVVARDGSGGQKQKGPGKGQGAGDAA. Residues 21-31 show a composition bias toward basic and acidic residues; it reads KGYDDQQRHQE. The segment covering 98 to 115 has biased composition (gly residues); the sequence is GSGGQKQKGPGKGQGAGD.

The protein belongs to the UPF0229 family.

This chain is UPF0229 protein BCA_0588, found in Bacillus cereus (strain 03BB102).